Consider the following 100-residue polypeptide: Small ribosomal subunit protein uS14c (100 aa).

This sequence belongs to the universal ribosomal protein uS14 family. In terms of assembly, part of the 30S ribosomal subunit.

It is found in the plastid. It localises to the chloroplast. Its function is as follows. Binds 16S rRNA, required for the assembly of 30S particles. This is Small ribosomal subunit protein uS14c from Barbarea verna (Land cress).